The following is a 592-amino-acid chain: Aspartate--tRNA ligase (592 aa).

Glu173 provides a ligand contact to L-aspartate. Residues 197-200 (QLFK) form an aspartate region. Arg219 is an L-aspartate binding site. Residues 219 to 221 (RDE) and Gln228 each bind ATP. L-aspartate is bound at residue His448. Glu482 is a binding site for ATP. Arg489 is a binding site for L-aspartate. Residue 534 to 537 (GLDR) participates in ATP binding.

The protein belongs to the class-II aminoacyl-tRNA synthetase family. Type 1 subfamily. As to quaternary structure, homodimer.

It localises to the cytoplasm. The enzyme catalyses tRNA(Asp) + L-aspartate + ATP = L-aspartyl-tRNA(Asp) + AMP + diphosphate. Its function is as follows. Catalyzes the attachment of L-aspartate to tRNA(Asp) in a two-step reaction: L-aspartate is first activated by ATP to form Asp-AMP and then transferred to the acceptor end of tRNA(Asp). This Shewanella baltica (strain OS195) protein is Aspartate--tRNA ligase.